We begin with the raw amino-acid sequence, 420 residues long: Serine hydroxymethyltransferase (420 aa).

(6S)-5,6,7,8-tetrahydrofolate contacts are provided by residues leucine 121 and 125–127 (GHL). Lysine 230 carries the N6-(pyridoxal phosphate)lysine modification. 354-356 (SPF) lines the (6S)-5,6,7,8-tetrahydrofolate pocket.

The protein belongs to the SHMT family. As to quaternary structure, homodimer. It depends on pyridoxal 5'-phosphate as a cofactor.

Its subcellular location is the cytoplasm. It catalyses the reaction (6R)-5,10-methylene-5,6,7,8-tetrahydrofolate + glycine + H2O = (6S)-5,6,7,8-tetrahydrofolate + L-serine. Its pathway is one-carbon metabolism; tetrahydrofolate interconversion. The protein operates within amino-acid biosynthesis; glycine biosynthesis; glycine from L-serine: step 1/1. Functionally, catalyzes the reversible interconversion of serine and glycine with tetrahydrofolate (THF) serving as the one-carbon carrier. This reaction serves as the major source of one-carbon groups required for the biosynthesis of purines, thymidylate, methionine, and other important biomolecules. Also exhibits THF-independent aldolase activity toward beta-hydroxyamino acids, producing glycine and aldehydes, via a retro-aldol mechanism. In Rickettsia africae (strain ESF-5), this protein is Serine hydroxymethyltransferase.